We begin with the raw amino-acid sequence, 133 residues long: Holo-[acyl-carrier-protein] synthase (133 aa).

Mg(2+) is bound by residues Asp-8 and Glu-64.

The protein belongs to the P-Pant transferase superfamily. AcpS family. Requires Mg(2+) as cofactor.

It is found in the cytoplasm. The enzyme catalyses apo-[ACP] + CoA = holo-[ACP] + adenosine 3',5'-bisphosphate + H(+). In terms of biological role, transfers the 4'-phosphopantetheine moiety from coenzyme A to a Ser of acyl-carrier-protein. In Shewanella loihica (strain ATCC BAA-1088 / PV-4), this protein is Holo-[acyl-carrier-protein] synthase.